Here is an 878-residue protein sequence, read N- to C-terminus: NUT family member 2A (878 aa).

Disordered stretches follow at residues 273–324, 417–566, 627–757, and 775–878; these read WSQG…DDSC, QKSQ…LSYT, KEKQ…EEEE, and WLPQ…RCSQ. Pro residues-rich tracts occupy residues 278 to 288 and 427 to 444; these read PLPPPPPPAAQ and CLPPPATPRLEPRGPPAP. Over residues 476 to 487 the composition is skewed to basic residues; that stretch reads TKARRPPPRPHR. The span at 537–551 shows a compositional bias: basic and acidic residues; it reads EPEKQREEGEVKQPQ.

The protein belongs to the NUT family.

The sequence is that of NUT family member 2A (NUTM2A) from Homo sapiens (Human).